The primary structure comprises 236 residues: N-acetyl-alpha-D-glucosaminyl L-malate deacetylase 1 (236 aa).

Zn(2+) is bound by residues histidine 12, aspartate 15, and histidine 113.

It belongs to the PIGL family. The cofactor is Zn(2+).

The catalysed reaction is (S)-malyl N-acetyl-alpha-D-glucosaminide + H2O = (S)-malyl alpha-D-glucosaminide + acetate. Functionally, involved in bacillithiol (BSH) biosynthesis. Catalyzes the second step of the pathway, the deacetylation of N-acetylglucosaminylmalate (GlcNAc-Mal) to glucosamine malate (GlcN-Mal). The sequence is that of N-acetyl-alpha-D-glucosaminyl L-malate deacetylase 1 from Bacillus subtilis (strain 168).